Reading from the N-terminus, the 258-residue chain is uncharacterized protein (258 aa).

Residues asparagine 60, asparagine 104, and asparagine 113 are each glycosylated (N-linked (GlcNAc...) asparagine; by host). Over residues 147–156 (TTRKPGQKTT) the composition is skewed to low complexity. The interval 147–183 (TTRKPGQKTTLSRLKTTPNKHTQHKRSTRRTSPRDYN) is disordered. Residues 157-166 (LSRLKTTPNK) are compositionally biased toward polar residues. Basic residues predominate over residues 167–177 (HTQHKRSTRRT). Asparagine 183 is a glycosylation site (N-linked (GlcNAc...) asparagine; by host). A helical transmembrane segment spans residues 208–228 (AHSAWILIVIIIIIVVILFFF).

Belongs to the RL11 family.

The protein localises to the membrane. This is an uncharacterized protein from Human cytomegalovirus (strain AD169) (HHV-5).